We begin with the raw amino-acid sequence, 274 residues long: Tryptophan synthase alpha chain (274 aa).

Active-site proton acceptor residues include Glu-49 and Asp-60.

Belongs to the TrpA family. In terms of assembly, tetramer of two alpha and two beta chains.

It catalyses the reaction (1S,2R)-1-C-(indol-3-yl)glycerol 3-phosphate + L-serine = D-glyceraldehyde 3-phosphate + L-tryptophan + H2O. It functions in the pathway amino-acid biosynthesis; L-tryptophan biosynthesis; L-tryptophan from chorismate: step 5/5. The alpha subunit is responsible for the aldol cleavage of indoleglycerol phosphate to indole and glyceraldehyde 3-phosphate. The polypeptide is Tryptophan synthase alpha chain (Alkalilimnicola ehrlichii (strain ATCC BAA-1101 / DSM 17681 / MLHE-1)).